The sequence spans 189 residues: Tumor protein p53-inducible protein 11 (189 aa).

Residues 1–63 (MAGKQPPPLM…FAVREPLGLR (63 aa)) lie on the Cytoplasmic side of the membrane. Ser14 carries the phosphoserine modification. Residues 64–84 (VWQFLSAMLFSSVAIMALALP) traverse the membrane as a helical segment. The Extracellular segment spans residues 85 to 108 (DQLYDAVFDGAEVTSKTPIRLYGG). A helical transmembrane segment spans residues 109–129 (ALLSISLIMWNALYTAEKVII). Position 130 (Arg130) is a topological domain, cytoplasmic. Residues 131-151 (WTLLTEACYFGVQSLVVTATL) traverse the membrane as a helical segment. Residues 152–155 (AETG) lie on the Extracellular side of the membrane. A helical membrane pass occupies residues 156 to 176 (LMSLGTVLLLASRLLFVIVSI). Residues 177-189 (YYYYQVGRKPKKV) are Cytoplasmic-facing.

It is found in the membrane. This is Tumor protein p53-inducible protein 11 (Trp53i11) from Mus musculus (Mouse).